Here is a 430-residue protein sequence, read N- to C-terminus: Putative aspergillopepsin A-like aspartic endopeptidase MCYG_07979 (430 aa).

A signal peptide spans 1 to 17 (MHLSSLLVAVLLPLALS). The propeptide at 18 to 87 (KPTPRKKPGS…SKIAGGAPGA (70 aa)) is activation peptide. The disordered stretch occupies residues 59 to 105 (STQGMDGYRPEPISRFQGNSKIAGGAPGAKDDGKDEKGEVENNPTSH). The segment covering 87–98 (AKDDGKDEKGEV) has biased composition (basic and acidic residues). The region spanning 109–427 (FLSPVTIGGQ…DYRGPSVSLA (319 aa)) is the Peptidase A1 domain. D125 is an active-site residue. N-linked (GlcNAc...) asparagine glycosylation is present at N306. D314 is an active-site residue. N352 is a glycosylation site (N-linked (GlcNAc...) asparagine).

It belongs to the peptidase A1 family.

Its subcellular location is the secreted. The chain is Putative aspergillopepsin A-like aspartic endopeptidase MCYG_07979 from Arthroderma otae (strain ATCC MYA-4605 / CBS 113480) (Microsporum canis).